Here is a 102-residue protein sequence, read N- to C-terminus: Large ribosomal subunit protein bL21 (102 aa).

This sequence belongs to the bacterial ribosomal protein bL21 family. In terms of assembly, part of the 50S ribosomal subunit. Contacts protein L20.

In terms of biological role, this protein binds to 23S rRNA in the presence of protein L20. The protein is Large ribosomal subunit protein bL21 of Ehrlichia ruminantium (strain Welgevonden).